Consider the following 158-residue polypeptide: 2S seed storage albumin protein (158 aa).

Positions 1 to 21 are cleaved as a signal peptide; sequence MTKFTILLISLLFCIAHTCSA. A Cell attachment site motif is present at residues 54–56; that stretch reads RGD. Residues 65–81 constitute a propeptide that is removed on maturation; that stretch reads NHILRTMRGRINYIRRN.

It belongs to the 2S seed storage albumins family. The protein consists of two chains linked by 2 disulfide bonds. As to expression, expressed in cotyledons. Maximal expression in parenchyma cells undergoing DNA endoreduplication and cell expansion but not in actively dividing cells of the cotyledon.

Its function is as follows. This is a 2S seed storage protein. Functionally, binds to mammalian chromatin, preventing the normal formation of the kinetochore complex in the centromere and leading to the disruption of mitosis. The sequence is that of 2S seed storage albumin protein from Glycine max (Soybean).